Here is a 131-residue protein sequence, read N- to C-terminus: MFSDNSHCPDCGQQWFPSLELGHWLYQTELVENECYQVFLDRINRADYCPECYPDNPANRSLVLPWSFPLEWAPQNLTRWTFEKACHPFLLGPPLVRKRIHDSRVAGFNPALQLILTRTDKTLNKKLGQNK.

This is Torsin-1A-interacting protein 2, isoform IFRG15 (TOR1AIP2) from Homo sapiens (Human).